The chain runs to 1242 residues: ATP-dependent helicase/nuclease subunit A (1242 aa).

The region spanning 12–487 (SRWTDEQWKA…IDLASNFRSR (476 aa)) is the UvrD-like helicase ATP-binding domain. 33–40 (AAAGSGKT) contacts ATP. One can recognise a UvrD-like helicase C-terminal domain in the interval 514 to 808 (AAQLKYGADY…RVMTIHSSKG (295 aa)).

Belongs to the helicase family. AddA subfamily. As to quaternary structure, heterodimer of AddA and AddB/RexB. It depends on Mg(2+) as a cofactor.

It carries out the reaction Couples ATP hydrolysis with the unwinding of duplex DNA by translocating in the 3'-5' direction.. It catalyses the reaction ATP + H2O = ADP + phosphate + H(+). Its function is as follows. The heterodimer acts as both an ATP-dependent DNA helicase and an ATP-dependent, dual-direction single-stranded exonuclease. Recognizes the chi site generating a DNA molecule suitable for the initiation of homologous recombination. The AddA nuclease domain is required for chi fragment generation; this subunit has the helicase and 3' -&gt; 5' nuclease activities. This is ATP-dependent helicase/nuclease subunit A from Geobacillus thermodenitrificans (strain NG80-2).